A 446-amino-acid polypeptide reads, in one-letter code: RUN domain-containing protein 3A (446 aa).

Residues 1–298 are interaction with RAP2A; sequence MEASFVQTTM…LQLQLEEAAA (298 aa). One can recognise an RUN domain in the interval 52-189; sequence DDSSEEFVNF…IDFSFCLKGE (138 aa). Thr215 carries the post-translational modification Phosphothreonine. The tract at residues 216 to 239 is disordered; sequence DEEERHSAESSTSEDNSPEHPYLP. Ser232 bears the Phosphoserine mark. The stretch at 267 to 322 forms a coiled coil; sequence YLEELVRLRESQLKDLEAENRRLQLQLEEAAAQNQREKRELEGVILELQEQLTGLI. The segment covering 372 to 384 has biased composition (polar residues); it reads PLSAEASLSSDSQ. Positions 372–403 are disordered; sequence PLSAEASLSSDSQRLGEAKRDEEPWGPIGKDP. Basic and acidic residues predominate over residues 385–394; the sequence is RLGEAKRDEE. Ser416 and Ser419 each carry phosphoserine.

The protein belongs to the RUNDC3 family. Interacts with the GTP-bound form of RAP2A. In terms of tissue distribution, brain.

Its function is as follows. May act as an effector of RAP2A in neuronal cells. The chain is RUN domain-containing protein 3A (Rundc3a) from Mus musculus (Mouse).